Here is a 259-residue protein sequence, read N- to C-terminus: 4-hydroxy-tetrahydrodipicolinate reductase (259 aa).

Residues 8–13 (GFAGAM), 94–96 (GTT), and 120–123 (APNF) contribute to the NAD(+) site. The active-site Proton donor/acceptor is the His150. His151 is a binding site for (S)-2,3,4,5-tetrahydrodipicolinate. The Proton donor role is filled by Lys154. 160–161 (GT) is a binding site for (S)-2,3,4,5-tetrahydrodipicolinate.

This sequence belongs to the DapB family.

The protein resides in the cytoplasm. The enzyme catalyses (S)-2,3,4,5-tetrahydrodipicolinate + NAD(+) + H2O = (2S,4S)-4-hydroxy-2,3,4,5-tetrahydrodipicolinate + NADH + H(+). It catalyses the reaction (S)-2,3,4,5-tetrahydrodipicolinate + NADP(+) + H2O = (2S,4S)-4-hydroxy-2,3,4,5-tetrahydrodipicolinate + NADPH + H(+). It participates in amino-acid biosynthesis; L-lysine biosynthesis via DAP pathway; (S)-tetrahydrodipicolinate from L-aspartate: step 4/4. Its function is as follows. Catalyzes the conversion of 4-hydroxy-tetrahydrodipicolinate (HTPA) to tetrahydrodipicolinate. This Limosilactobacillus fermentum (strain NBRC 3956 / LMG 18251) (Lactobacillus fermentum) protein is 4-hydroxy-tetrahydrodipicolinate reductase.